We begin with the raw amino-acid sequence, 132 residues long: DNA-directed RNA polymerase subunit omega (132 aa).

Residues 89–109 (HSSESESIFNTSSQEEGTSFD) form a disordered region. A compositionally biased stretch (polar residues) spans 96–105 (IFNTSSQEEG).

This sequence belongs to the RNA polymerase subunit omega family. As to quaternary structure, the RNAP catalytic core consists of 2 alpha, 1 beta, 1 beta' and 1 omega subunit. When a sigma factor is associated with the core the holoenzyme is formed, which can initiate transcription.

The enzyme catalyses RNA(n) + a ribonucleoside 5'-triphosphate = RNA(n+1) + diphosphate. Functionally, promotes RNA polymerase assembly. Latches the N- and C-terminal regions of the beta' subunit thereby facilitating its interaction with the beta and alpha subunits. The polypeptide is DNA-directed RNA polymerase subunit omega (Bartonella tribocorum (strain CIP 105476 / IBS 506)).